The following is a 254-amino-acid chain: Segregation and condensation protein A (254 aa).

This sequence belongs to the ScpA family. As to quaternary structure, component of a cohesin-like complex composed of ScpA, ScpB and the Smc homodimer, in which ScpA and ScpB bind to the head domain of Smc. The presence of the three proteins is required for the association of the complex with DNA.

Its subcellular location is the cytoplasm. Participates in chromosomal partition during cell division. May act via the formation of a condensin-like complex containing Smc and ScpB that pull DNA away from mid-cell into both cell halves. This is Segregation and condensation protein A from Clostridium tetani (strain Massachusetts / E88).